Here is a 687-residue protein sequence, read N- to C-terminus: MIDQYKHQQLRIGSVSPQQISAWAKKILPNGEIVGEVTKPYTFHYKTNKPEKDGLFCERIFGPIKSGICACGNYRVIRDKKDDPKFCEQCGVEFIDSRIRRYQMGYIKLACLVTHVWYLKRLPSYIANLLDKSLKELESLVYCDFSFARPVVKKPTFLRLRGSFEYEIQSWKHSIPLFFTTQGFDIFRNREISSGAGAIREQLADLDLRILMDSSLIEWKELGEEGSPDNENEWEDRKVGRRKNFLVRRIELAKHFLRTNIEPEWMVLCLLPVLPPELRPIIQIDGGKLMSSDINELYRRVIYRNNTLIDLLTTSRSTPGELVMCQEKLVQEAVDTLLDNGIRGQPMRDGHNKVYKSFSDIIEGKEGRFRETLLGKRVDYSGRSVIVVGPSLSLHRCGLPREIAIELFQTFLIRGLIRKHFASNIGIAKSKIREKEPIVWEILQEVMQGHPVLLNRAPTLHRLGIQAFQPILVEGRAICLHPLVCKGFNADFDGDQMAVHVPLSLEAQAEARLLMFSHTNLLSPAIGDPISVPTQDMLIGLYILTSGNRRGIYSNRYNPRNCGNFRNLKNERIRDNNYKYTKKKEPFFCNSYDAIGAYQQKRINFDSPLWLRWRLDQRIISSREVPIEVHYESLGTYHEIYEHYLVVRSTKKEIRSIYIRTNVGHISFYREIEEAIQGFCRAYSYDI.

Cys69, Cys71, Cys87, and Cys90 together coordinate Zn(2+). Asp491, Asp493, and Asp495 together coordinate Mg(2+).

It belongs to the RNA polymerase beta' chain family. RpoC1 subfamily. In terms of assembly, in plastids the minimal PEP RNA polymerase catalytic core is composed of four subunits: alpha, beta, beta', and beta''. When a (nuclear-encoded) sigma factor is associated with the core the holoenzyme is formed, which can initiate transcription. The cofactor is Mg(2+). Requires Zn(2+) as cofactor.

Its subcellular location is the plastid. The protein localises to the chloroplast. The catalysed reaction is RNA(n) + a ribonucleoside 5'-triphosphate = RNA(n+1) + diphosphate. DNA-dependent RNA polymerase catalyzes the transcription of DNA into RNA using the four ribonucleoside triphosphates as substrates. This Glycine max (Soybean) protein is DNA-directed RNA polymerase subunit beta'.